We begin with the raw amino-acid sequence, 131 residues long: L-ectoine synthase (131 aa).

This sequence belongs to the ectoine synthase family.

The enzyme catalyses (2S)-4-acetamido-2-aminobutanoate = L-ectoine + H2O. Its pathway is amine and polyamine biosynthesis; ectoine biosynthesis; L-ectoine from L-aspartate 4-semialdehyde: step 3/3. In terms of biological role, catalyzes the circularization of gamma-N-acetyl-alpha,gamma-diaminobutyric acid (ADABA) to ectoine (1,4,5,6-tetrahydro-2-methyl-4-pyrimidine carboxylic acid), which is an excellent osmoprotectant. The protein is L-ectoine synthase of Wolinella succinogenes (strain ATCC 29543 / DSM 1740 / CCUG 13145 / JCM 31913 / LMG 7466 / NCTC 11488 / FDC 602W) (Vibrio succinogenes).